The chain runs to 256 residues: L-rhamnose 1-dehydrogenase (NAD(P)(+)) (256 aa).

8 residues coordinate NADP(+): Gly-12, Ser-14, Arg-15, Ile-17, Ser-37, Asp-66, Ala-67, and Asn-93. Ser-146 (proton donor) is an active-site residue. Residues Ser-146, Ser-148, Gln-156, and Tyr-159 each coordinate beta-L-rhamnose. Residues Tyr-159 and Lys-163 each coordinate NADP(+). The active-site Proton acceptor is Tyr-159. Lys-163 acts as the Lowers pKa of active site Tyr in catalysis. Thr-191 lines the beta-L-rhamnose pocket. An NADP(+)-binding site is contributed by Ile-192. A beta-L-rhamnose-binding site is contributed by Asn-197.

The protein belongs to the short-chain dehydrogenases/reductases (SDR) family.

The enzyme catalyses L-rhamnofuranose + NAD(+) = L-rhamnono-1,4-lactone + NADH + H(+). The catalysed reaction is L-rhamnofuranose + NADP(+) = L-rhamnono-1,4-lactone + NADPH + H(+). It functions in the pathway carbohydrate degradation; L-rhamnose degradation. Its function is as follows. NAD(P)-dependent dehydrogenase that catalyzes the oxidation of L-rhamnose to L-rhamnono-1,4-lactone. Also shows high activity with L-lyxose and low activity with L-mannose and L-fucose. Can utilize either NAD(+) or NADP(+), with a strong preference for NADP(+). Catalyzes the first step in an alternative pathway for rhamnose utilization that does not involve phosphorylated intermediates. The chain is L-rhamnose 1-dehydrogenase (NAD(P)(+)) from Azotobacter vinelandii (strain DJ / ATCC BAA-1303).